The chain runs to 184 residues: Ribosome-recycling factor (184 aa).

Positions Asp-141 to Asn-165 are disordered.

This sequence belongs to the RRF family.

It localises to the cytoplasm. Its function is as follows. Responsible for the release of ribosomes from messenger RNA at the termination of protein biosynthesis. May increase the efficiency of translation by recycling ribosomes from one round of translation to another. The polypeptide is Ribosome-recycling factor (Staphylococcus epidermidis (strain ATCC 35984 / DSM 28319 / BCRC 17069 / CCUG 31568 / BM 3577 / RP62A)).